A 650-amino-acid chain; its full sequence is Epithelial sodium channel subunit beta (650 aa).

Residues 1 to 95 (MLLHINPAYL…IICEGPKKKA (95 aa)) are Cytoplasmic-facing. The chain crosses the membrane as a helical span at residues 96 to 116 (MWFLLTLLFTALVCWQWGIFI). Residues 117 to 542 (RTYLSWEVSV…GGQFGFWMGG (426 aa)) lie on the Extracellular side of the membrane. 5 disulfide bridges follow: Cys143-Cys317, Cys229-Cys234, Cys241-Cys248, Cys294-Cys301, and Cys406-Cys458. Asn244 carries an N-linked (GlcNAc...) asparagine glycan. Asn305 is a glycosylation site (N-linked (GlcNAc...) asparagine). The helical transmembrane segment at 543 to 563 (SVLCLIEFGEIIIDFVWITII) threads the bilayer. At 564-650 (KLVALAKSLR…IESDSEGDAI (87 aa)) the chain is on the cytoplasmic side. Residues 600 to 650 (FQPDTAPRSPNTGPYPNEQALPIPGTPPPNYDSLRLQPLDVIESDSEGDAI) form a disordered region. A PY motif; recruits WW domain-containing proteins and is thereby required for ubiquitination and inhibition of the channel by NEDD4 and NEDD4L motif is present at residues 626-630 (PPPNY). The segment covering 641–650 (IESDSEGDAI) has biased composition (acidic residues). Residues Ser643 and Ser645 each carry the phosphoserine modification.

This sequence belongs to the amiloride-sensitive sodium channel (TC 1.A.6) family. SCNN1B subfamily. In terms of assembly, component of the heterotrimeric epithelial sodium channel (ENaC) composed of an alpha/SCNN1A, a beta/SCNN1B and a gamma/SCNN1G subunit. An additional delta/SCNN1D subunit can replace the alpha/SCNN1A subunit to form an alternative channel with specific properties. Interacts with WWP1 (via WW domains). Interacts with WWP2 (via WW domains); inhibits the channel. Interacts with the full-length immature form of PCSK9 (pro-PCSK9). Interacts (N-glycosylated) with BPIFA1; the interaction is direct and inhibits the proteolytic processing of SCNN1A and SCNN1G and the activation of ENaC. Ubiquitinated. Can be ubiquitinated at multiple sites and undergo monoubiquitination and polyubiquitination. Ubiquitination by NEDD4 or NEDD4L inhibits the ENaC channel through endocytosis, intracellular retention and degradation of its individual subunits. However, some studies could not confirm the ubiquitination of this subunit of the ENaC. Post-translationally, phosphorylated on serine and threonine residues. Aldosterone and insulin increase the basal level of phosphorylation. In terms of processing, N-glycosylated. N-glycosylation is required for interaction with BPIFA1.

Its subcellular location is the apical cell membrane. It is found in the cytoplasmic vesicle membrane. It carries out the reaction Na(+)(in) = Na(+)(out). Its activity is regulated as follows. Originally identified and characterized by its inhibition by the diuretic drug amiloride. Functionally, this is one of the three pore-forming subunits of the heterotrimeric epithelial sodium channel (ENaC), a critical regulator of sodium balance and fluid homeostasis. ENaC operates in epithelial tissues, where it mediates the electrodiffusion of sodium ions from extracellular fluid through the apical membrane of cells, with water following osmotically. It plays a key role in maintaining sodium homeostasis through electrogenic sodium reabsorption in the kidneys. Additionally, ENaC is essential for airway surface liquid homeostasis, which is crucial for proper mucus clearance. The chain is Epithelial sodium channel subunit beta from Pan troglodytes (Chimpanzee).